We begin with the raw amino-acid sequence, 222 residues long: 7-cyano-7-deazaguanine synthase (222 aa).

Residue 8–18 participates in ATP binding; it reads LSGGLDSTTCL. Positions 186, 194, 197, and 200 each coordinate Zn(2+).

The protein belongs to the QueC family. In terms of assembly, homodimer. It depends on Zn(2+) as a cofactor.

It catalyses the reaction 7-carboxy-7-deazaguanine + NH4(+) + ATP = 7-cyano-7-deazaguanine + ADP + phosphate + H2O + H(+). It participates in purine metabolism; 7-cyano-7-deazaguanine biosynthesis. Its function is as follows. Catalyzes the ATP-dependent conversion of 7-carboxy-7-deazaguanine (CDG) to 7-cyano-7-deazaguanine (preQ(0)). The chain is 7-cyano-7-deazaguanine synthase from Acetivibrio thermocellus (strain ATCC 27405 / DSM 1237 / JCM 9322 / NBRC 103400 / NCIMB 10682 / NRRL B-4536 / VPI 7372) (Clostridium thermocellum).